The primary structure comprises 701 residues: MGLPEERVRSGSGSRGQEEAGAGGRARSWSPPPEVSRSAHVPSLQRYRELHRRSVEEPREFWGDIAKEFYWKTPCPGPFLRYNFDVTKGKIFIEWMKGATTNICYNVLDRNVHEKKLGDKVAFYWEGNEPGETTQITYHQLLVQVCQFSNVLRKQGIQKGDRVAIYMPMIPELVVAMLACARIGALHSIVFAGFSSESLCERILDSSCSLLITTDAFYRGEKLVNLKELADEALQKCQEKGFPVRCCIVVKHLGRAELGMGDSTSQSPPIKRSCPDVQISWNQGIDLWWHELMQEAGDECEPEWCDAEDPLFILYTSGSTGKPKGVVHTVGGYMLYVATTFKYVFDFHAEDVFWCTADIGWITGHSYVTYGPLANGATSVLFEGIPTYPDVNRLWSIVDKYKVTKFYTAPTAIRLLMKFGDEPVTKHSRASLQVLGTVGEPINPEAWLWYHRVVGAQRCPIVDTFWQTETGGHMLTPLPGATPMKPGSATFPFFGVAPAILNESGEELEGEAEGYLVFKQPWPGIMRTVYGNHERFETTYFKKFPGYYVTGDGCQRDQDGYYWITGRIDDMLNVSGHLLSTAEVESALVEHEAVAEAAVVGHPHPVKGECLYCFVTLCDGHTFSPKLTEELKKQIREKIGPIATPDYIQNAPGLPKTRSGKIMRRVLRKIAQNDHDLGDMSTVADPSVISHLFSHRCLTIQ.

The interval Met1–Val41 is disordered. Positions Met1 to Val107 are interaction with TFEB. Residues Ser28, Ser30, and Ser36 each carry the phosphoserine modification. Arg219 to Lys222 contacts CoA. Ser263, Ser265, and Ser267 each carry phosphoserine. Residue Thr363 participates in CoA binding. Residue Lys418 is modified to N6-acetyllysine. Residues Gly439–Pro441, Asp463–Thr468, Asp552, and Arg567 contribute to the ATP site. 2 residues coordinate CoA: Ser575 and Arg636. The Nuclear localization signal signature appears at Lys656–Arg668. Ser659 is subject to Phosphoserine; by AMPK. Lys661 is subject to N6-acetyllysine.

It belongs to the ATP-dependent AMP-binding enzyme family. Monomer. Interacts with TFEB. AMPK-mediated phosphorylated form at Ser-659 interacts with KPNA1; this interaction results in nuclear translocation of ACSS2. Interacts with the 'Thr-172' phosphorylated form of PRKAA2. Interacts with CREBBP. Reversibly acetylated at Lys-661. The acetyl-CoA synthase activity is inhibited by acetylation and activated by deacetylation mediated by the deacetylases SIRT1 and SIRT3. Post-translationally, glucose deprivation results in its AMPK-dependent phosphorylation at Ser-659, which leads to exposure of its nuclear localization signal, required for its interaction with KPNA1 and subsequent translocation to the nucleus.

The protein resides in the cytoplasm. The protein localises to the cytosol. It is found in the nucleus. The enzyme catalyses acetate + ATP + CoA = acetyl-CoA + AMP + diphosphate. It carries out the reaction propanoate + ATP + CoA = propanoyl-CoA + AMP + diphosphate. Its activity is regulated as follows. Inhibited by acetylation at Lys-661 and activated by deacetylation mediated by the deacetylases SIRT1 and SIRT3. Functionally, catalyzes the synthesis of acetyl-CoA from short-chain fatty acids. Acetate is the preferred substrate. Can also utilize propionate with a much lower affinity. Nuclear ACSS2 promotes glucose deprivation-induced lysosomal biogenesis and autophagy, tumor cell survival and brain tumorigenesis. Glucose deprivation results in AMPK-mediated phosphorylation of ACSS2 leading to its translocation to the nucleus where it binds to TFEB and locally produces acetyl-CoA for histone acetylation in the promoter regions of TFEB target genes thereby activating their transcription. The regulation of genes associated with autophagy and lysosomal activity through ACSS2 is important for brain tumorigenesis and tumor survival. Acts as a chromatin-bound transcriptional coactivator that up-regulates histone acetylation and expression of neuronal genes. Can be recruited to the loci of memory-related neuronal genes to maintain a local acetyl-CoA pool, providing the substrate for histone acetylation and promoting the expression of specific genes, which is essential for maintaining long-term spatial memory. The chain is Acetyl-coenzyme A synthetase, cytoplasmic (ACSS2) from Homo sapiens (Human).